Consider the following 400-residue polypeptide: MAP kinase-activated protein kinase 2 (400 aa).

A disordered region spans residues 1 to 43 (MLSNSQGQSPPVPFPAPAPPPQPPTPALPHPPAQPPPPPPQQF). The residue at position 9 (serine 9) is a Phosphoserine. Residues 10 to 42 (PPVPFPAPAPPPQPPTPALPHPPAQPPPPPPQQ) show a composition bias toward pro residues. Phosphothreonine is present on threonine 25. One can recognise a Protein kinase domain in the interval 64 to 325 (KVTSQVLGLG…ITEFMNHPWI (262 aa)). ATP is bound by residues 70–78 (LGLGINGKV) and lysine 93. Position 139–141 (139–141 (ECL)) interacts with staurosporine. The Proton acceptor role is filled by aspartate 186. Phosphothreonine; by MAPK14 is present on threonine 222. Serine 272 carries the post-translational modification Phosphoserine; by MAPK14. Serine 328 is modified (phosphoserine; by autocatalysis). Residues 328–364 (STKVPQTPLHTSRVLKEDKERWEDVKEEMTSALATMR) form an autoinhibitory helix region. A Phosphothreonine; by MAPK14 modification is found at threonine 334. Lysine 353 participates in a covalent cross-link: Glycyl lysine isopeptide (Lys-Gly) (interchain with G-Cter in SUMO). Positions 356–365 (MTSALATMRV) match the Nuclear export signal (NES) motif. Residues 366-390 (DYEQIKIKKIEDASNPLLLKRRKKA) are p38 MAPK-binding site. 2 consecutive short sequence motifs (bipartite nuclear localization signal) follow at residues 371–374 (KIKK) and 385–389 (KRRKK).

The protein belongs to the protein kinase superfamily. CAMK Ser/Thr protein kinase family. As to quaternary structure, heterodimer with p38-alpha/MAPK14; this heterodimer forms a stable complex: molecules are positioned 'face to face' so that the ATP-binding sites of both kinases are at the heterodimer interface. Interacts with PHC2. Interacts with HSF1. Post-translationally, sumoylation inhibits the protein kinase activity. In terms of processing, phosphorylated and activated by MAP kinase p38-alpha/MAPK14 at Thr-222, Ser-272 and Thr-334. Expressed in all tissues examined.

It is found in the cytoplasm. Its subcellular location is the nucleus. It carries out the reaction L-seryl-[protein] + ATP = O-phospho-L-seryl-[protein] + ADP + H(+). It catalyses the reaction L-threonyl-[protein] + ATP = O-phospho-L-threonyl-[protein] + ADP + H(+). With respect to regulation, activated following phosphorylation by p38-alpha/MAPK14 following various stresses. Inhibited following sumoylation. Specifically inhibited by pyrrolopyridine inhibitors. Its function is as follows. Stress-activated serine/threonine-protein kinase involved in cytokine production, endocytosis, reorganization of the cytoskeleton, cell migration, cell cycle control, chromatin remodeling, DNA damage response and transcriptional regulation. Following stress, it is phosphorylated and activated by MAP kinase p38-alpha/MAPK14, leading to phosphorylation of substrates. Phosphorylates serine in the peptide sequence, Hyd-X-R-X(2)-S, where Hyd is a large hydrophobic residue. Phosphorylates ALOX5, CDC25B, CDC25C, CEP131, ELAVL1, HNRNPA0, HSP27/HSPB1, KRT18, KRT20, LIMK1, LSP1, PABPC1, PARN, PDE4A, RCSD1, RPS6KA3, TAB3 and TTP/ZFP36. Phosphorylates HSF1; leading to the interaction with HSP90 proteins and inhibiting HSF1 homotrimerization, DNA-binding and transactivation activities. Mediates phosphorylation of HSP27/HSPB1 in response to stress, leading to the dissociation of HSP27/HSPB1 from large small heat-shock protein (sHsps) oligomers and impairment of their chaperone activities and ability to protect against oxidative stress effectively. Involved in inflammatory response by regulating tumor necrosis factor (TNF) and IL6 production post-transcriptionally: acts by phosphorylating AU-rich elements (AREs)-binding proteins ELAVL1, HNRNPA0, PABPC1 and TTP/ZFP36, leading to the regulation of the stability and translation of TNF and IL6 mRNAs. Phosphorylation of TTP/ZFP36, a major post-transcriptional regulator of TNF, promotes its binding to 14-3-3 proteins and reduces its ARE mRNA affinity, leading to inhibition of dependent degradation of ARE-containing transcripts. Phosphorylates CEP131 in response to cellular stress induced by ultraviolet irradiation which promotes binding of CEP131 to 14-3-3 proteins and inhibits formation of novel centriolar satellites. Also involved in late G2/M checkpoint following DNA damage through a process of post-transcriptional mRNA stabilization: following DNA damage, relocalizes from nucleus to cytoplasm and phosphorylates HNRNPA0 and PARN, leading to stabilization of GADD45A mRNA. Involved in toll-like receptor signaling pathway (TLR) in dendritic cells: required for acute TLR-induced macropinocytosis by phosphorylating and activating RPS6KA3. The sequence is that of MAP kinase-activated protein kinase 2 (MAPKAPK2) from Homo sapiens (Human).